We begin with the raw amino-acid sequence, 718 residues long: Protein Hook homolog 1 (718 aa).

The Calponin-homology (CH) domain maps to 8–124 (PLLCDSLILW…RLMQLILGCA (117 aa)). 2 coiled-coil regions span residues 164–428 (SASD…ELRY) and 473–652 (LLLQ…AKLR).

The protein belongs to the hook family. In terms of assembly, interacts with microtubules.

The protein resides in the cytoplasm. Its subcellular location is the cytoskeleton. May function to promote vesicle trafficking and/or fusion. This Gallus gallus (Chicken) protein is Protein Hook homolog 1 (HOOK1).